Here is a 572-residue protein sequence, read N- to C-terminus: MRTSQYLFSTLKETPNDAQVVSHQLMLRAGMIRPMASGLYNWLPTGIRVLKKVEKVVREEMNKGGAIEVLMPVVQPAELWEESGRWDQYGPELLRFEDRGNRNFVLGPTHEEVITDLVRREVSSYKQLPLNLYQIQTKFRDEVRPRFGVMRSREFIMKDAYSFHTTQESLQATYDVMYQVYSNIFNRLGLDFRAVQADTGSIGGSASHEFQVLASSGEDDVVFSTESDFAANIELAEAIAIGERQAPTAEMCLVDTPNAKTIAELVEQFNLPIEKTVKTLIVKGADENQPLVALIIRGDHELNEIKAQKHPLVADPLEFADETEIKAKIGSGVGSLGAVNLNIPAIIDRTVALMSDFSCGANIDGKHYFNVNWERDVAIPKVFDLRNVVEGDPSPDGKGTLQIKRGIEVGHIFQLGKKYSEAMKATVQGEDGKPLVMTMGCYGIGVTRVVASAIEQHHDERGIIWPSDEIAPFTVAIVPMNMHKSEAVQKYAEELYRTLQSQGVDVIFDDRKERPGVMFADMELIGVPHMVVIGEKNLDNGEIEYKNRRTGEKEMISKDKLLSVLNEKLGNL.

Belongs to the class-II aminoacyl-tRNA synthetase family. ProS type 1 subfamily. Homodimer. May form a tertiary complex with YbaK and t-RNA(Pro).

The protein resides in the cytoplasm. The catalysed reaction is tRNA(Pro) + L-proline + ATP = L-prolyl-tRNA(Pro) + AMP + diphosphate. In terms of biological role, catalyzes the attachment of proline to tRNA(Pro) in a two-step reaction: proline is first activated by ATP to form Pro-AMP and then transferred to the acceptor end of tRNA(Pro). As ProRS can inadvertently accommodate and process non-cognate amino acids such as alanine and cysteine, to avoid such errors it has two additional distinct editing activities against alanine. One activity is designated as 'pretransfer' editing and involves the tRNA(Pro)-independent hydrolysis of activated Ala-AMP. The other activity is designated 'posttransfer' editing and involves deacylation of mischarged Ala-tRNA(Pro). The misacylated Cys-tRNA(Pro) is not edited by ProRS, but is probably edited in trans by YbaK. The sequence is that of Proline--tRNA ligase from Haemophilus influenzae (strain ATCC 51907 / DSM 11121 / KW20 / Rd).